A 455-amino-acid chain; its full sequence is Gamma-aminobutyric acid receptor subunit alpha-1 (455 aa).

An N-terminal signal peptide occupies residues M1–G27. Over Q28–F253 the chain is Extracellular. N38 carries an N-linked (GlcNAc...) asparagine glycan. A 4-aminobutanoate-binding site is contributed by R94. N-linked (GlcNAc...) asparagine glycosylation occurs at N138. T157 serves as a coordination point for 4-aminobutanoate. The cysteines at positions 166 and 180 are disulfide-linked. Residues V254–L274 traverse the membrane as a helical segment. The Cytoplasmic portion of the chain corresponds to N275–V279. Residues P280 to R301 traverse the membrane as a helical segment. Residues N302–T311 lie on the Extracellular side of the membrane. Residues A312–T333 traverse the membrane as a helical segment. Topologically, residues V334–R420 are cytoplasmic. Residues L421–T440 form a helical membrane-spanning segment. The Extracellular portion of the chain corresponds to Y441–Q455.

This sequence belongs to the ligand-gated ion channel (TC 1.A.9) family. Gamma-aminobutyric acid receptor (TC 1.A.9.5) subfamily. GABRA1 sub-subfamily. Heteropentamer, formed by a combination of alpha (GABRA1-6), beta (GABRB1-3), gamma (GABRG1-3), delta (GABRD), epsilon (GABRE), rho (GABRR1-3), pi (GABRP) and theta (GABRQ) subunits, each subunit exhibiting distinct physiological and pharmacological properties. Brain.

Its subcellular location is the postsynaptic cell membrane. The protein localises to the cell membrane. It catalyses the reaction chloride(in) = chloride(out). With respect to regulation, allosterically activated by benzodiazepines, the neuroanesthetic alphaxalone and pentobarbital. Inhibited by the antagonist bicuculline. Potentiated by histamine. In terms of biological role, alpha subunit of the heteropentameric ligand-gated chloride channel gated by gamma-aminobutyric acid (GABA), a major inhibitory neurotransmitter in the brain. GABA-gated chloride channels, also named GABA(A) receptors (GABAAR), consist of five subunits arranged around a central pore and contain GABA active binding site(s) located at the alpha and beta subunit interface(s). When activated by GABA, GABAARs selectively allow the flow of chloride anions across the cell membrane down their electrochemical gradient. Chloride influx into the postsynaptic neuron following GABAAR opening decreases the neuron ability to generate a new action potential, thereby reducing nerve transmission. The GABAARs can also initiate the formation of functional inhibitory GABAergic synapses. GABAARs function also as histamine receptor where histamine binds at the interface of two neighboring beta subunits and potentiates GABA response. The sequence is that of Gamma-aminobutyric acid receptor subunit alpha-1 (GABRA1) from Gallus gallus (Chicken).